The following is a 396-amino-acid chain: MSTTAPRAVAERWRELHGEDHWKGLLDPLDADLRRSVIGYGELAQATNDAFIREAWSPHAGACRYSRDRFLEKAQASTQLAGLYEVTAFFYATAGAGGVPAPFMVRNRESNWMGYVAVATDAGVAALGRRDVVVAWRGTVRPMEWLNDLDFTLVSAAGVLGAGGRSPAPRVHRGWLSIYTASDPASKYSKLSAREQISDEIKRLMDKYKDEETSITVVGHSLGAAVATLNAADIVSNGLNQHGACPVTAVAFACPRVGDSGFRKLFDELPGLRLLRVCNSPDVVPKYPPMGYADVGVELPVDTRRSPYLKSPGNQAVWHSLECYMHGVAGAQGKRGGFKLEVDRDVALVNKNVDALKEEYHVPPSWSVQRDKGMVRGADGHWKLMDYEGEESSQDK.

Catalysis depends on Ser221, which acts as the Acyl-ester intermediate. Catalysis depends on charge relay system residues Ser221, Asp282, and His319.

It belongs to the AB hydrolase superfamily. Lipase family.

It localises to the cytoplasm. In terms of biological role, acylhydrolase that catalyzes the hydrolysis of phospholipids at the sn-1 position. The chain is Phospholipase A1-II 4 from Oryza sativa subsp. japonica (Rice).